We begin with the raw amino-acid sequence, 461 residues long: Ufm1-specific protease 2 (461 aa).

Catalysis depends on residues C294, D418, and H420.

This sequence belongs to the peptidase C78 family.

It is found in the endoplasmic reticulum. The protein localises to the cytoplasm. It localises to the nucleus. Functionally, thiol-dependent isopeptidase that specifically cleaves UFM1, a ubiquitin-like modifier protein, from conjugated proteins, such as CD274/PD-L1, CYB5R3, DDRGK1, MRE11, RPL26/uL24, TRIP4 and RPL26/uL24. While it is also able to mediate the processing of UFM1 precursors, a prerequisite for conjugation reactions, UFSP2 mainly acts as a protein deUFMylase that mediates deconjugation of UFM1 from target proteins. Mediates deUFMylation of RPL26/uL24, a critical step to release the UFM1 ribosome E3 ligase (UREL) complex during the recycling of 60S ribosome subunits from the endoplasmic reticulum. Catalyzes deUFMylation of TRIP4, regulating intracellular nuclear receptors transactivation and thereby regulate cell proliferation and differentiation. This chain is Ufm1-specific protease 2, found in Rattus norvegicus (Rat).